The primary structure comprises 108 residues: uncharacterized protein (108 aa).

3 helical membrane-spanning segments follow: residues 10–32, 45–67, and 77–99; these read SLCYFSVFIAPIIVPIVAYFVVN, ISHIVPFVGWLFLFIALLGGAVA, and FVIIGGAVIYFLVVIGIIIWNVI.

It localises to the cell membrane. This is an uncharacterized protein from Bacillus subtilis (strain 168).